The sequence spans 196 residues: Transmembrane protein 126A (196 aa).

The Mitochondrial matrix portion of the chain corresponds to 1 to 34 (MESHKPSTNKDDLIFNIIPRKIKQLPESDRNLLE). Residues 35-55 (YGSAYIGLNAAFGGLIANSLF) traverse the membrane as a helical segment. The Mitochondrial intermembrane portion of the chain corresponds to 56 to 57 (RR). Residues 58–78 (ILNVTQARVASSLPMAVIPFL) form a helical membrane-spanning segment. At 79 to 106 (TANLSYHSFVSLPLSTGNLNCEICTTTR) the chain is on the mitochondrial matrix side. The helical transmembrane segment at 107–127 (GTLVGFVLGGLYPILLAIPVN) threads the bilayer. The Mitochondrial intermembrane segment spans residues 128 to 159 (GGLAARYESSPLPQRGNIFNYWITISKPVFRK). The helical transmembrane segment at 160–176 (MLFPTLLQTAFAAYLGS) threads the bilayer. The Mitochondrial matrix segment spans residues 177 to 196 (RQYKLLIKALQLPEPDLEIQ).

It belongs to the TMEM126 family. In terms of assembly, interacts with OXA1L; promoting cotranslational quality control in mitochondria.

It is found in the mitochondrion inner membrane. Functionally, protein required for the cotranslational protein quality control in the inner membrane of the mitochondria. Associates with newly synthesized polypeptides and may act as a chaperone that cooperates with OXA1L for the insertion of newly synthesized mitochondrial proteins into the inner membrane. Required for the assembly of the ND4 module of mitochondrial complex I. The polypeptide is Transmembrane protein 126A (Tmem126a) (Rattus norvegicus (Rat)).